Here is a 140-residue protein sequence, read N- to C-terminus: 5-NmdU N-acetyltransferase (140 aa).

The 139-residue stretch at 2–140 (IVVRKALPEE…GEGLALFKEW (139 aa)) folds into the N-acetyltransferase domain.

It belongs to the acetyltransferase family.

The catalysed reaction is 5-aminomethyl-dUMP in DNA + acetyl-CoA = 5-acetylaminomethyl-dUMP in DNA + CoA + H(+). In terms of biological role, acetylates 5-aminomethyl-2'-deoxyuridine (5-NmdU) to produce 5-acetylaminomethyl-2'-deoxyuridine (5-AcNmdU) on DNA as a step in the pathway leading to thymidine hypermodifications in the viral genome. As a final result of the pathway of hypermodification, 5-acetylaminomethyl-2'-deoxyuridine (5-AcNmdU) substitutes for a subset of thymidines in the viral DNA. These modifications probably prevent degradation of viral genome by the host restriction-modification antiviral defense system. This is 5-NmdU N-acetyltransferase from Pseudomonas aeruginosa.